Consider the following 651-residue polypeptide: MTLEITRSELIKSKLIDAPERCGVYRMFDVNKQVIYVGKAKNLKKRLTHYIKSDLDNKTLRMIANTCFLEYSITNSEVEALLLEAQLIKKFQPKFNILLKDDKSFPFIKLRLDHDFPQLLKYRGKTLNDGKCFGPFASATEVNTTLTELQKIFKLRSCTDNYFNSRTRPCMQYEIKRCYAPCVGKINKEDYRDLVAQVKDFLQGRTKALQENLSKKMEELSSQMRFEEAAEIRDRIKALSYVQLKSCVSDIVKDADIIVVVEKNGHYCVEVFLYRAWQACGNIPYFPTSTENSTKEEVLEYFLLQFYQKQQVPAEIIINHEINDKENMIEAIKKINNITKLNIIIPISGGKAKLVQNAAIKALFSLEQYLKKFVKNQEIMLEIKALFGLHEIPERIEIYDNSHIQGKFAVGVVVVVGKAGFDKKEYRVFSLSSCDASLSSHAYPFSPRNLIAGSSTLTNPMDPVVRSREDDTSSTHNYAVGDDYEMLRQVLIRRLTRLKNEPHKLPSLMIIDGGKGHLGIVKEVMDKFAMHIPFVCMSKGVDRNAGIEQFHMTGKEVFTLDTNLPIMKYLQILRDEAHNFAIKNHRLGRSRAIKISSLDNIEGVGETRKKALLHYFGSYKAVCDATIDELTKVNGINKSLAAMIFRTLHKR.

A GIY-YIG domain is found at 20 to 97 (ERCGVYRMFD…IKKFQPKFNI (78 aa)). In terms of domain architecture, UVR spans 207–242 (KALQENLSKKMEELSSQMRFEEAAEIRDRIKALSYV).

The protein belongs to the UvrC family. As to quaternary structure, interacts with UvrB in an incision complex.

The protein resides in the cytoplasm. Its function is as follows. The UvrABC repair system catalyzes the recognition and processing of DNA lesions. UvrC both incises the 5' and 3' sides of the lesion. The N-terminal half is responsible for the 3' incision and the C-terminal half is responsible for the 5' incision. The protein is UvrABC system protein C of Rickettsia akari (strain Hartford).